The chain runs to 505 residues: Megakaryocyte-associated tyrosine-protein kinase (505 aa).

The SH3 domain maps to 46-108; that stretch reads APGTQCMTKC…AAAALRHGEA (63 aa). Residues 120 to 209 enclose the SH2 domain; that stretch reads WFHGKISGQE…AICTKLVKPR (90 aa). The Protein kinase domain occupies 233 to 481; the sequence is LTLGAQIGEG…IVEKLGRELR (249 aa). ATP is bound by residues 239–247 and Lys260; that span reads IGEGEFGAV. Catalysis depends on Asp350, which acts as the Proton acceptor. A disordered region spans residues 483-505; the sequence is VGVSAPAGGQEAEGSAPTRSQDP.

The protein belongs to the protein kinase superfamily. Tyr protein kinase family. CSK subfamily. In terms of assembly, interacts with KIT. In terms of tissue distribution, most abundant in brain, and to a lesser extent in the spleen, the thymus and the liver. Also found in the T-cell lineage.

It is found in the cytoplasm. It localises to the membrane. It catalyses the reaction L-tyrosyl-[protein] + ATP = O-phospho-L-tyrosyl-[protein] + ADP + H(+). Its function is as follows. Could play a significant role in the signal transduction of hematopoietic cells. May regulate tyrosine kinase activity of SRC-family members in brain by specifically phosphorylating their C-terminal regulatory tyrosine residue which acts as a negative regulatory site. It may play an inhibitory role in the control of T-cell proliferation. This is Megakaryocyte-associated tyrosine-protein kinase (Matk) from Mus musculus (Mouse).